The following is a 1560-amino-acid chain: Tenascin-N (1560 aa).

Positions 1-26 are cleaved as a signal peptide; that stretch reads MGLWGMLAFPLGFLLASVLLVASAPA. EGF-like domains follow at residues 167–198, 199–229, and 230–260; these read DQPT…VDCA, YAAC…EDCS, and EQRC…PDCS. Cystine bridges form between C171-C181, C175-C186, C188-C197, C202-C212, C206-C217, C219-C228, C233-C243, C237-C248, and C250-C259. Fibronectin type-III domains lie at 264–353, 354–444, 445–532, 533–622, 623–706, 709–798, 799–882, 885–970, 973–1062, 1063–1144, 1149–1238, and 1239–1325; these read APQG…DLAV, VGTA…TEID, GPTN…TEID, SPEN…IDSP, KNLV…APTD, GPKN…IDSP, GPKN…APTD, SPKN…IDSP, KNLV…TKAP, SPKN…IDPP, and RNLR…VDAR. 2 disordered regions span residues 868-888 and 1044-1063; these read GTQE…GPKN and GARE…DSPK. Positions 1044 to 1061 are enriched in basic and acidic residues; the sequence is GARESKKANTEGHTDIDS. The 218-residue stretch at 1323–1540 folds into the Fibrinogen C-terminal domain; the sequence is DARFPHPSDC…YVELKIRPFG (218 aa). The N-linked (GlcNAc...) asparagine glycan is linked to N1411.

It belongs to the tenascin family. In terms of assembly, homohexamer. Highest expression in kidney followed by spleen and brain. In brain, highest expression is found in hippocampus, cerebellum and olfactory bulb. Expressed in aortic valve, corneal limbus. Expressed in ribs periosteum. During a fracture repair process, expression increases in cells of newly formed perichondrium/peristeum surrounding the cartalaginous callus.

It is found in the secreted. The protein resides in the extracellular space. The protein localises to the extracellular matrix. Extracellular matrix protein that seems to be a ligand for ITGA8:ITGB1, ITGAV:ITGB1 and ITGA4:ITGB1. Involved in neurite outgrowth and cell migration in hippocampal explants. During endochondral bone formation, inhibits proliferation and differentiation of proteoblasts mediated by canonical WNT signaling. In tumors, stimulates angiogenesis by elongation, migration and sprouting of endothelial cells. Expressed in most mammary tumors, may facilitate tumorigenesis by supporting the migratory behavior of breast cancer cells. The sequence is that of Tenascin-N from Mus musculus (Mouse).